The following is a 48-amino-acid chain: Sperm protamine P1 (48 aa).

It belongs to the protamine P1 family. In terms of tissue distribution, testis.

The protein localises to the nucleus. It localises to the chromosome. Functionally, protamines substitute for histones in the chromatin of sperm during the haploid phase of spermatogenesis. They compact sperm DNA into a highly condensed, stable and inactive complex. The sequence is that of Sperm protamine P1 (PRM1) from Corynorhinus townsendii (Townsend's big-eared bat).